The following is a 396-amino-acid chain: Tryptophan synthase beta chain 1 (396 aa).

N6-(pyridoxal phosphate)lysine is present on Lys-86.

It belongs to the TrpB family. As to quaternary structure, tetramer of two alpha and two beta chains. Pyridoxal 5'-phosphate serves as cofactor.

The catalysed reaction is (1S,2R)-1-C-(indol-3-yl)glycerol 3-phosphate + L-serine = D-glyceraldehyde 3-phosphate + L-tryptophan + H2O. The protein operates within amino-acid biosynthesis; L-tryptophan biosynthesis; L-tryptophan from chorismate: step 5/5. Functionally, the beta subunit is responsible for the synthesis of L-tryptophan from indole and L-serine. This Vibrio parahaemolyticus serotype O3:K6 (strain RIMD 2210633) protein is Tryptophan synthase beta chain 1 (trpB1).